Consider the following 541-residue polypeptide: Copper transport protein CutJ (541 aa).

A signal peptide spans 1–25; the sequence is MKRNRWWIILLLFLVFLPKTSFAHA. Positions 24 and 110 each coordinate Cu cation. The next 8 helical transmembrane spans lie at 146-166, 180-200, 228-248, 262-282, 293-313, 335-355, 370-390, and 407-427; these read AILYTALSLFIGTVFFHLFWY, ILTGSIAALGLALLLQLPIQT, SIWIIQAALFVLLALSVIPAI, PLIFFFGLLLAKAFTGHAAVV, FLHLTSASIWVGGIAALVLLL, WALTAVGVILFSGLLNGFFII, LLVKSGLFVFMLVLGAIHFLL, and WAIGIAVLITAAVFTSLPSPP.

In the N-terminal section; belongs to the CopC family. The protein in the C-terminal section; belongs to the CopD family.

It localises to the cell membrane. Its function is as follows. Involved in uptake of extracellular oxidized copper under copper-limiting conditions. The polypeptide is Copper transport protein CutJ (Bacillus subtilis (strain 168)).